The sequence spans 227 residues: Abasic site processing protein YoaM (227 aa).

The active-site Nucleophile is the Cys-2. Cys-2 is subject to Thiazolidine linkage to a ring-opened DNA abasic site. Glu-106 is an active-site residue.

The protein belongs to the SOS response-associated peptidase family.

Its activity is regulated as follows. Formation and reversal of DNA-protein cross-link depends on DNA context. Catalyzes formation of the thiazolidine linkage in presence of abasic sites in single-stranded DNA. Mediates the reversal of the thiazolidine cross-link in presence of double stranded DNA. Functionally, sensor of abasic sites in single-stranded DNA (ssDNA) required to preserve genome integrity by promoting error-free repair of abasic sites. Recognizes and binds abasic sites in ssDNA at replication forks and chemically modifies the lesion by forming a covalent cross-link with DNA: forms a stable thiazolidine linkage between a ring-opened abasic site and the alpha-amino and sulfhydryl substituents of its N-terminal catalytic cysteine residue. The DNA-protein cross-link is then reversed: able to catalyze the reversal of the thiazolidine cross-link and cycle between a cross-link and a non-cross-linked state depending on DNA context: mediates self-reversal of the thiazolidine cross-link in double stranded DNA. May act as a protease: mediates autocatalytic processing of its N-terminal methionine in order to expose the catalytic cysteine. The protein is Abasic site processing protein YoaM (yoaM) of Bacillus subtilis (strain 168).